A 372-amino-acid chain; its full sequence is Glutamate 5-kinase (372 aa).

K9 lines the ATP pocket. S49, D136, and N148 together coordinate substrate. ATP is bound by residues 168–169 (TD) and 210–216 (TGGMKSK). Residues 276–360 (EGKVFIDDGA…PAIEVIHRDS (85 aa)) form the PUA domain.

The protein belongs to the glutamate 5-kinase family.

Its subcellular location is the cytoplasm. It catalyses the reaction L-glutamate + ATP = L-glutamyl 5-phosphate + ADP. It participates in amino-acid biosynthesis; L-proline biosynthesis; L-glutamate 5-semialdehyde from L-glutamate: step 1/2. Catalyzes the transfer of a phosphate group to glutamate to form L-glutamate 5-phosphate. The protein is Glutamate 5-kinase of Oceanobacillus iheyensis (strain DSM 14371 / CIP 107618 / JCM 11309 / KCTC 3954 / HTE831).